The following is a 604-amino-acid chain: MRSHSCGDLRSDAIDSTVLLSGWVDRRRDHGGVIFIDLRDRSGTVQITVDPDLGAEAFAVAEHLRNETVLQVEGRVRARPDESRNERLATGEVEVLAQRLKVLNAPSRNLPFAVSVHDDEQVREELRLRHRYLDLRRERMRRNLSLRHQTVQTARRFLEDEGFIEVETPVLTRSTPEGARDYLVPSRVCGGEWFALPQSPQLFKQLLMVGGLERYYQVARCFRDEDLRADRQPEFTQLDMEMSFLDQEQILDLNERLIGRIWKLVKGVELSLPLPRMTWHEAMERYGTDRPDTRYGMELVGVSDIVADMGFKVFSGAVAAGGSVKCITVPGGNDKVSNVRIKPGGDVFSEAQKAGAGGLAFIRVRDGGEIDTIGAIKDNLSDEKKAQLLQRTGAEPGSLILFGAGDTATVNKALDRVRQYLAKELEMVPAEAWNFLWVVDFPMFEFNADENRLEALHHPFCAANPEDLGDDPALWSERLPTARAQAYDLVLNGLELGGGSLRIHDAALQNQVLQTIGLAQEEAQEQFGFLLEALEMGAPPHGGIAFGLDRMVMLLAGEESIRDTIAFPKTQQARCLMTSAPGGASDKQLEELHVASTWVEPEEN.

An L-aspartate-binding site is contributed by glutamate 177. Residues 201–204 (QLFK) form an aspartate region. Arginine 223 serves as a coordination point for L-aspartate. Residues 223 to 225 (RDE) and glutamine 232 each bind ATP. Histidine 457 contacts L-aspartate. Residue glutamate 495 coordinates ATP. Arginine 502 lines the L-aspartate pocket. 547 to 550 (GLDR) lines the ATP pocket.

Belongs to the class-II aminoacyl-tRNA synthetase family. Type 1 subfamily. Homodimer.

The protein resides in the cytoplasm. The enzyme catalyses tRNA(Asx) + L-aspartate + ATP = L-aspartyl-tRNA(Asx) + AMP + diphosphate. Its function is as follows. Aspartyl-tRNA synthetase with relaxed tRNA specificity since it is able to aspartylate not only its cognate tRNA(Asp) but also tRNA(Asn). Reaction proceeds in two steps: L-aspartate is first activated by ATP to form Asp-AMP and then transferred to the acceptor end of tRNA(Asp/Asn). In Synechococcus sp. (strain RCC307), this protein is Aspartate--tRNA(Asp/Asn) ligase.